A 134-amino-acid chain; its full sequence is Small ribosomal subunit protein uS9c (134 aa).

Over residues Asp-105–Ala-114 the composition is skewed to basic and acidic residues. The disordered stretch occupies residues Asp-105–Arg-134. Residues Lys-115 to Arg-134 show a composition bias toward basic residues.

This sequence belongs to the universal ribosomal protein uS9 family.

The protein localises to the plastid. It is found in the cyanelle. The chain is Small ribosomal subunit protein uS9c (rps9) from Cyanophora paradoxa.